We begin with the raw amino-acid sequence, 145 residues long: Large ribosomal subunit protein bL19 (145 aa).

The protein belongs to the bacterial ribosomal protein bL19 family.

In terms of biological role, this protein is located at the 30S-50S ribosomal subunit interface and may play a role in the structure and function of the aminoacyl-tRNA binding site. The sequence is that of Large ribosomal subunit protein bL19 from Brucella anthropi (strain ATCC 49188 / DSM 6882 / CCUG 24695 / JCM 21032 / LMG 3331 / NBRC 15819 / NCTC 12168 / Alc 37) (Ochrobactrum anthropi).